Consider the following 553-residue polypeptide: Zinc finger protein 426 (553 aa).

The 72-residue stretch at 40 to 111 folds into the KRAB domain; the sequence is VSFDDVIVDF…KIVFPEWKIQ (72 aa). 11 C2H2-type zinc fingers span residues 222 to 244, 277 to 299, 305 to 327, 333 to 355, 361 to 383, 389 to 411, 417 to 439, 445 to 467, 473 to 495, 501 to 525, and 531 to 553; these read FECSDCGKSFMNQSHLQTHQRTH, HRCKECGKGYRYPAYLNIHMRTH, YECKECGKAFNYSNSFQIHGRTH, YVCNQCGKAFTQHSGLSIHVRSH, YACKECGKAFLTSSRLIQHIRTH, FVCVKCGKAFAISSNLNGHLKMH, CECKICGKAFGYLSCLNNHMRTH, YTCKECGKAFNYSTHLKIHMRIH, YECKQCGKAFSHSTSFQIHERTH, YECKECGKAFICPSSFRIHEISHTH, and YKCQQCGKAYSHPRSLRRHERIH.

It is found in the nucleus. In terms of biological role, may be involved in transcriptional regulation. This is Zinc finger protein 426 (Znf426) from Rattus norvegicus (Rat).